The following is a 120-amino-acid chain: Thiosulfate sulfurtransferase 16, chloroplastic (120 aa).

The 101-residue stretch at 20–120 (LLAGHRYLDV…WAKNGLPTKA (101 aa)) folds into the Rhodanese domain. Catalysis depends on Cys-80, which acts as the Cysteine persulfide intermediate. Arg-85 is a binding site for substrate.

As to quaternary structure, monomer.

Its subcellular location is the plastid. The protein localises to the chloroplast. It carries out the reaction thiosulfate + hydrogen cyanide = thiocyanate + sulfite + 2 H(+). Thought to act during the early stages of leaf senescence. Catalyzes the transfer of a sulfur ion from a donor to cyanide or to other thiol compounds. Substrate preference is thiosulfate &gt; 3-mercaptopyruvate. This is Thiosulfate sulfurtransferase 16, chloroplastic (STR16) from Arabidopsis thaliana (Mouse-ear cress).